The chain runs to 394 residues: Putative gustatory receptor 22a (394 aa).

The Cytoplasmic segment spans residues 1 to 16 (MSQPKRIHRICKGLAR). Residues 17–37 (FTIRATLYGSWVLGLFPFTFD) form a helical membrane-spanning segment. Topologically, residues 38–47 (SRKRRLNRSK) are extracellular. N44 carries an N-linked (GlcNAc...) asparagine glycan. The chain crosses the membrane as a helical span at residues 48–68 (WLLAYGLVLNLTLLVLSMLPS). Over 69–148 (TDDHNSVKVE…HTFNRYVIEK (80 aa)) the chain is Cytoplasmic. The chain crosses the membrane as a helical span at residues 149-169 (GLVIILEIGSSLVLYFGIPNS). Residue K170 is a topological domain, extracellular. A helical membrane pass occupies residues 171-191 (IVVYEAVCIYIVQLEVLMVVM). The Cytoplasmic segment spans residues 192–256 (HFHLAVIYIY…TAIYDIQVTL (65 aa)). Residues 257-277 (FMATLFSVNIIVGHVLVICWI) form a helical membrane-spanning segment. N278 carries N-linked (GlcNAc...) asparagine glycosylation. Residues 278–281 (NITR) are Extracellular-facing. The helical transmembrane segment at 282-302 (FSLLVIFLLFPQALIINFWDL) threads the bilayer. The Cytoplasmic portion of the chain corresponds to 303–361 (WQGIAFCDLAESTGKKTSMILKLFNDMENMDQETERRVTEFTLFCSHRRLKVCHLGLLD). The helical transmembrane segment at 362-382 (INYEMGFRMIITNILYVVFLV) threads the bilayer. Over 383-394 (QFDYMNLKFKTD) the chain is Extracellular.

It belongs to the insect chemoreceptor superfamily. Gustatory receptor (GR) family. Gr22e subfamily. Expressed in neurons of the terminal external chemosensory organ of larvae.

Its subcellular location is the cell membrane. Probable gustatory receptor which mediates acceptance or avoidance behavior, depending on its substrates. The protein is Putative gustatory receptor 22a (Gr22a) of Drosophila melanogaster (Fruit fly).